The following is a 230-amino-acid chain: RNA chaperone ProQ (230 aa).

Positions 104 to 176 (AEAKARVQAQ…APRQNTEKLT (73 aa)) are disordered. A compositionally biased stretch (basic and acidic residues) spans 115–132 (AEQRAKKREAEGDKETSK).

It belongs to the ProQ family.

It localises to the cytoplasm. In terms of biological role, RNA chaperone with significant RNA binding, RNA strand exchange and RNA duplexing activities. May regulate ProP activity through an RNA-based, post-transcriptional mechanism. This Proteus mirabilis (strain HI4320) protein is RNA chaperone ProQ.